The primary structure comprises 89 residues: Pyrin domain-containing protein 1 (89 aa).

The region spanning 1–89 (MGTKREAILK…EEAARLQRAA (89 aa)) is the Pyrin domain.

Interacts with PYCARD/ASC (via pyrin domain). Post-translationally, phosphorylated. In terms of tissue distribution, predominantly expressed in monocytes, macrophages and granulocytes.

Its subcellular location is the cytoplasm. Functionally, associates with PYCARD/ASC and modulates its ability to collaborate with MEFV/pyrin and NLRP3/cryopyrin in NF-kappa-B and pro-caspase-1 activation. Suppresses kinase activity of NF-kappa-B inhibitor kinase (IKK) complex, expression of NF-kappa-B inducible genes and inhibits NF-kappa-B activation by cytokines and LPS. The polypeptide is Pyrin domain-containing protein 1 (Homo sapiens (Human)).